A 164-amino-acid polypeptide reads, in one-letter code: Phosphopantetheine adenylyltransferase (164 aa).

Ser-9 contacts substrate. Residues 9-10 (SF) and His-17 each bind ATP. The substrate site is built by Lys-41, Leu-74, and Arg-88. ATP contacts are provided by residues 89–91 (GIR), Glu-99, and 124–130 (YAEVSST).

This sequence belongs to the bacterial CoaD family. In terms of assembly, homohexamer. The cofactor is Mg(2+).

It localises to the cytoplasm. It carries out the reaction (R)-4'-phosphopantetheine + ATP + H(+) = 3'-dephospho-CoA + diphosphate. It participates in cofactor biosynthesis; coenzyme A biosynthesis; CoA from (R)-pantothenate: step 4/5. Reversibly transfers an adenylyl group from ATP to 4'-phosphopantetheine, yielding dephospho-CoA (dPCoA) and pyrophosphate. This Chromobacterium violaceum (strain ATCC 12472 / DSM 30191 / JCM 1249 / CCUG 213 / NBRC 12614 / NCIMB 9131 / NCTC 9757 / MK) protein is Phosphopantetheine adenylyltransferase.